The chain runs to 916 residues: Beta-scruin (916 aa).

Kelch repeat units lie at residues 82-133 (AVLI…YFHG), 134-187 (KVYL…IMDE), 188-235 (RIFV…NNEG), 237-289 (IYVV…TQNK), 291-341 (IWIW…KAGT), and 342-390 (QVFI…GIPV). The segment at 393–426 (SPASDITTSKTTRSGSRKTQKTLKDKQQSDIHAR) is disordered. Positions 414–425 (TLKDKQQSDIHA) are enriched in basic and acidic residues. Kelch repeat units follow at residues 586 to 637 (VIIA…YYRG), 638 to 691 (AIYV…VFND), 692 to 739 (SIYV…SHGG), 741 to 793 (LWVM…VCDD), 795 to 847 (IWLC…ALES), and 849 to 896 (LYLI…TIPP).

As to expression, sperm.

Functionally, may have an enzymatic role. Found the acrosomal vesicle at the anterior of sperm but not in the acrosomal process. In Limulus polyphemus (Atlantic horseshoe crab), this protein is Beta-scruin.